The chain runs to 154 residues: Myoglobin (154 aa).

In terms of domain architecture, Globin spans 2 to 148 (GLSEAEWQLV…FRKDIAAKYK (147 aa)). Phosphoserine is present on Ser-4. Nitrite is bound at residue His-65. His-65 lines the O2 pocket. Thr-68 is modified (phosphothreonine). His-94 is a binding site for heme b.

This sequence belongs to the globin family. Monomeric.

It is found in the cytoplasm. The protein localises to the sarcoplasm. The catalysed reaction is Fe(III)-heme b-[protein] + nitric oxide + H2O = Fe(II)-heme b-[protein] + nitrite + 2 H(+). It catalyses the reaction H2O2 + AH2 = A + 2 H2O. Functionally, monomeric heme protein which primary function is to store oxygen and facilitate its diffusion within muscle tissues. Reversibly binds oxygen through a pentacoordinated heme iron and enables its timely and efficient release as needed during periods of heightened demand. Depending on the oxidative conditions of tissues and cells, and in addition to its ability to bind oxygen, it also has a nitrite reductase activity whereby it regulates the production of bioactive nitric oxide. Under stress conditions, like hypoxia and anoxia, it also protects cells against reactive oxygen species thanks to its pseudoperoxidase activity. The chain is Myoglobin (MB) from Mesoplodon carlhubbsi (Hubb's beaked whale).